A 167-amino-acid chain; its full sequence is Ubiquitin-conjugating enzyme E2 2 (167 aa).

The UBC core domain maps to 4–150 (PARRRLMRDF…VKETVEKSWE (147 aa)). Catalysis depends on C88, which acts as the Glycyl thioester intermediate. Residues 148-167 (SWEDNMDDMDDSDEDDEDDE) form a disordered region. Over residues 151 to 167 (DNMDDMDDSDEDDEDDE) the composition is skewed to acidic residues.

The protein belongs to the ubiquitin-conjugating enzyme family.

It is found in the cytoplasm. Its subcellular location is the nucleus. The catalysed reaction is S-ubiquitinyl-[E1 ubiquitin-activating enzyme]-L-cysteine + [E2 ubiquitin-conjugating enzyme]-L-cysteine = [E1 ubiquitin-activating enzyme]-L-cysteine + S-ubiquitinyl-[E2 ubiquitin-conjugating enzyme]-L-cysteine.. The protein operates within protein modification; protein ubiquitination. Its function is as follows. Catalyzes the covalent attachment of ubiquitin to other proteins. Plays a role in transcription regulation by catalyzing the monoubiquitination of histone H2B to form H2BK123ub1. H2BK123ub1 gives a specific tag for epigenetic transcriptional activation and is also a prerequisite for H3K4me and H3K79me formation. Also involved in postreplication repair of UV-damaged DNA, in N-end rule-dependent protein degradation and in sporulation. The protein is Ubiquitin-conjugating enzyme E2 2 (UBC2) of Candida glabrata (strain ATCC 2001 / BCRC 20586 / JCM 3761 / NBRC 0622 / NRRL Y-65 / CBS 138) (Yeast).